Consider the following 232-residue polypeptide: Ornithine carbamoyltransferase (232 aa).

Residues Gln-15, Arg-39, and 66-69 contribute to the carbamoyl phosphate site; that span reads HPTQ. Residues Asn-99, Asp-163, and 167 to 168 contribute to the L-ornithine site; that span reads SM. Residues 204-207 and Thr-232 each bind carbamoyl phosphate; that span reads HCLP.

It belongs to the aspartate/ornithine carbamoyltransferase superfamily. OTCase family.

It localises to the cytoplasm. The enzyme catalyses carbamoyl phosphate + L-ornithine = L-citrulline + phosphate + H(+). Its pathway is amino-acid biosynthesis; L-arginine biosynthesis; L-arginine from L-ornithine and carbamoyl phosphate: step 1/3. Functionally, reversibly catalyzes the transfer of the carbamoyl group from carbamoyl phosphate (CP) to the N(epsilon) atom of ornithine (ORN) to produce L-citrulline. In Neisseria sicca, this protein is Ornithine carbamoyltransferase (argF).